A 480-amino-acid polypeptide reads, in one-letter code: RAC-alpha serine/threonine-protein kinase (480 aa).

Residues 5–108 (AIVKEGWLHK…WATAIQTVAD (104 aa)) form the PH domain. N6-acetyllysine is present on residues lysine 14 and lysine 20. 14-19 (KRGEYI) contacts 1D-myo-inositol 1,3,4,5-tetrakisphosphate. 1D-myo-inositol 1,3,4,5-tetrakisphosphate is bound by residues 23–25 (RPR) and asparagine 53. A disulfide bond links cysteine 60 and cysteine 77. 1D-myo-inositol 1,3,4,5-tetrakisphosphate is bound at residue arginine 86. Residues 114–137 (EEETMDFRSGSPSDNSGAEEMEVS) are disordered. The residue at position 124 (serine 124) is a Phosphoserine. Serine 126 and serine 129 each carry phosphoserine; alternate. Residues serine 126 and serine 129 are each glycosylated (O-linked (GlcNAc) serine; alternate). The 259-residue stretch at 150-408 (FEYLKLLGKG…AKEIMQHRFF (259 aa)) folds into the Protein kinase domain. An ATP-binding site is contributed by 156–164 (LGKGTFGKV). A Phosphotyrosine; by TNK2 modification is found at tyrosine 176. Residue lysine 179 participates in ATP binding. Residue aspartate 274 is the Proton acceptor of the active site. A Glycyl lysine isopeptide (Lys-Gly) (interchain with G-Cter in ubiquitin) cross-link involves residue lysine 284. Residues cysteine 296 and cysteine 310 are joined by a disulfide bond. O-linked (GlcNAc) threonine glycosylation occurs at threonine 305. Threonine 308 carries the post-translational modification Phosphothreonine; by IKKE, PDPK1 and TBK1. A glycan (O-linked (GlcNAc) threonine) is linked at threonine 312. The 72-residue stretch at 409 to 480 (ANIVWQDVYE…QFSYSASGTA (72 aa)) folds into the AGC-kinase C-terminal domain. A Phosphothreonine modification is found at threonine 448. The residue at position 450 (threonine 450) is a Phosphothreonine; by MTOR. Positions 450-480 (TPPDQDDSMECVDSERRPHFPQFSYSASGTA) are disordered. A glycan (O-linked (GlcNAc) serine; alternate) is linked at serine 473. A Phosphoserine; by IKKE, MTOR, PRKDC and TBK1; alternate modification is found at serine 473. Tyrosine 474 is subject to Phosphotyrosine. Serine 477 carries the post-translational modification Phosphoserine; by CDK2 and MTOR. Position 479 is a phosphothreonine; by CDK2 and MTOR (threonine 479).

The protein belongs to the protein kinase superfamily. AGC Ser/Thr protein kinase family. RAC subfamily. In terms of assembly, interacts with and phosphorylated by PDPK1. Interacts with AGAP2 (isoform 2/PIKE-A); the interaction occurs in the presence of guanine nucleotides. Interacts with AKTIP. Interacts (via PH domain) with MTCP1, TCL1A and TCL1B. Interacts with CDKN1B; the interaction phosphorylates CDKN1B promoting 14-3-3 binding and cell-cycle progression. Interacts with MAP3K5 and TRAF6. Interacts with BAD, PPP2R5B, STK3 and STK4. Interacts (via PH domain) with SIRT1. Interacts with SRPK2 in a phosphorylation-dependent manner. Interacts with TRIM13; the interaction ubiquitinates AKT1 leading to its proteasomal degradation. Interacts with RAF1. Interacts (via the C-terminus) with CCDC88A (via its C-terminus) and THEM4 (via its C-terminus). Interacts with GRB10; the interaction leads to GRB10 phosphorylation thus promoting YWHAE-binding. Interacts with KCTD20. Interacts with BTBD10. Interacts with PA2G4. Interacts with KIF14; the interaction is detected in the plasma membrane upon INS stimulation and promotes AKT1 phosphorylation. Interacts with FAM83B; activates the PI3K/AKT signaling cascade. Interacts with WDFY2 (via WD repeats 1-3). Forms a complex with WDFY2 and FOXO1. Interacts with FAM168A. Interacts with SYAP1 (via phosphorylated form and BSD domain); this interaction is enhanced in a mTORC2-mediated manner in response to epidermal growth factor (EGF) stimulation and activates AKT1. Interacts with PKHM3. Interacts with FKBP5/FKBP51; promoting interaction between Akt/AKT1 and PHLPP1, thereby enhancing dephosphorylation and subsequent activation of Akt/AKT1. Interacts with TMEM175; leading to formation of the lysoK(GF) complex. Post-translationally, O-GlcNAcylation at Thr-305 and Thr-312 inhibits activating phosphorylation at Thr-308 via disrupting the interaction between AKT1 and PDPK1. O-GlcNAcylation at Ser-473 also probably interferes with phosphorylation at this site. In terms of processing, phosphorylation on Thr-308, Ser-473 and Tyr-474 is required for full activity. Phosphorylation of the activation loop at Thr-308 by PDPK1/PDK1 is a prerequisite for full activation. Phosphorylation by mTORC2 in response to growth factors plays a key role in AKT1 activation: mTORC2 phosphorylates different sites depending on the context, such as Thr-450, Ser-473, Ser-477 or Thr-479, thereby facilitating subsequent phosphorylation of the activation loop by PDPK1/PDK1. Phosphorylation at Ser-473 by mTORC2 promotes ubiquitination and degradation by the proteasome. Also phosphorylated at Ser-477 and Thr-479 by CDK2, facilitating subsequent phosphorylation of the activation loop by PDPK1/PDK1. Activated TNK2 phosphorylates it on Tyr-176 resulting in its binding to the anionic plasma membrane phospholipid PA. This phosphorylated form localizes to the cell membrane, where it is targeted by PDPK1 and PDPK2 for further phosphorylations on Thr-308 and Ser-473 leading to its activation. Phosphorylated at Thr-308 and Ser-473 by IKBKE and TBK1. Ser-473 phosphorylation is enhanced by interaction with AGAP2 isoform 2 (PIKE-A). Ser-473 phosphorylation is enhanced by signaling through activated FLT3. Ser-473 is dephosphorylated by PHLPP. Dephosphorylated at Thr-308 and Ser-473 by PP2A phosphatase. The phosphorylated form of PPP2R5B is required for bridging AKT1 with PP2A phosphatase. Ser-473 is dephosphorylated by CPPED1, leading to termination of signaling. AIM2 acts as an inhibitor of AKT1 by inhibiting phosphorylation Ser-473: AIM2 acts both by inhibiting the activity of PRKDC/DNA-PK kinase and promoting dephosphorylation by PP2A phosphatase. Ubiquitinated; undergoes both 'Lys-48'- and 'Lys-63'-linked polyubiquitination. TRAF6-induced 'Lys-63'-linked AKT1 ubiquitination is critical for phosphorylation and activation. When ubiquitinated, it translocates to the plasma membrane, where it becomes phosphorylated. When fully phosphorylated and translocated into the nucleus, undergoes 'Lys-48'-polyubiquitination catalyzed by TTC3, leading to its degradation by the proteasome. Also ubiquitinated by TRIM13 leading to its proteasomal degradation. Ubiquitinated via 'Lys-48'-linked polyubiquitination by ZNRF1, leading to its degradation by the proteasome. Phosphorylated, undergoes 'Lys-48'-linked polyubiquitination preferentially at Lys-284 catalyzed by MUL1, leading to its proteasomal degradation. Post-translationally, acetylated on Lys-14 and Lys-20 by the histone acetyltransferases EP300 and KAT2B. Acetylation results in reduced phosphorylation and inhibition of activity. Deacetylated at Lys-14 and Lys-20 by SIRT1. SIRT1-mediated deacetylation relieves the inhibition. In terms of processing, cleavage by caspase-3/CASP3. Cleaved at the caspase-3 consensus site Asp-462 during apoptosis, resulting in down-regulation of the AKT signaling pathway and decreased cell survival. Widely expressed. Low levels found in liver with slightly higher levels present in thymus and testis.

It is found in the cytoplasm. The protein localises to the nucleus. It localises to the cell membrane. Its subcellular location is the mitochondrion intermembrane space. It catalyses the reaction L-seryl-[protein] + ATP = O-phospho-L-seryl-[protein] + ADP + H(+). The enzyme catalyses L-threonyl-[protein] + ATP = O-phospho-L-threonyl-[protein] + ADP + H(+). Its activity is regulated as follows. Three specific sites, one in the kinase domain (Thr-308) and the two other ones in the C-terminal regulatory region (Ser-473 and Tyr-474), need to be phosphorylated for its full activation. AKT1 is one of 3 closely related serine/threonine-protein kinases (AKT1, AKT2 and AKT3) called the AKT kinase, and which regulate many processes including metabolism, proliferation, cell survival, growth and angiogenesis. This is mediated through serine and/or threonine phosphorylation of a range of downstream substrates. Over 100 substrate candidates have been reported so far, but for most of them, no isoform specificity has been reported. AKT is responsible of the regulation of glucose uptake by mediating insulin-induced translocation of the SLC2A4/GLUT4 glucose transporter to the cell surface. Phosphorylation of PTPN1 at 'Ser-50' negatively modulates its phosphatase activity preventing dephosphorylation of the insulin receptor and the attenuation of insulin signaling. Phosphorylation of TBC1D4 triggers the binding of this effector to inhibitory 14-3-3 proteins, which is required for insulin-stimulated glucose transport. AKT also regulates the storage of glucose in the form of glycogen by phosphorylating GSK3A at 'Ser-21' and GSK3B at 'Ser-9', resulting in inhibition of its kinase activity. Phosphorylation of GSK3 isoforms by AKT is also thought to be one mechanism by which cell proliferation is driven. AKT also regulates cell survival via the phosphorylation of MAP3K5 (apoptosis signal-related kinase). Phosphorylation of 'Ser-83' decreases MAP3K5 kinase activity stimulated by oxidative stress and thereby prevents apoptosis. AKT mediates insulin-stimulated protein synthesis by phosphorylating TSC2 at 'Ser-939' and 'Thr-1462', thereby activating the mTORC1 signaling pathway, and leading to both phosphorylation of 4E-BP1 and in activation of RPS6KB1. Also regulates the mTORC1 signaling pathway by catalyzing phosphorylation of CASTOR1 and DEPDC5. AKT plays a role as key modulator of the AKT-mTOR signaling pathway controlling the tempo of the process of newborn neurons integration during adult neurogenesis, including correct neuron positioning, dendritic development and synapse formation. Part of a positive feedback loop of mTORC2 signaling by mediating phosphorylation of MAPKAP1/SIN1, promoting mTORC2 activation. AKT is involved in the phosphorylation of members of the FOXO factors (Forkhead family of transcription factors), leading to binding of 14-3-3 proteins and cytoplasmic localization. In particular, FOXO1 is phosphorylated at 'Thr-24', 'Ser-256' and 'Ser-319'. FOXO3 and FOXO4 are phosphorylated on equivalent sites. AKT has an important role in the regulation of NF-kappa-B-dependent gene transcription and positively regulates the activity of CREB1 (cyclic AMP (cAMP)-response element binding protein). The phosphorylation of CREB1 induces the binding of accessory proteins that are necessary for the transcription of pro-survival genes such as BCL2 and MCL1. AKT phosphorylates 'Ser-454' on ATP citrate lyase (ACLY), thereby potentially regulating ACLY activity and fatty acid synthesis. Activates the 3B isoform of cyclic nucleotide phosphodiesterase (PDE3B) via phosphorylation of 'Ser-273', resulting in reduced cyclic AMP levels and inhibition of lipolysis. Phosphorylates PIKFYVE on 'Ser-318', which results in increased PI(3)P-5 activity. The Rho GTPase-activating protein DLC1 is another substrate and its phosphorylation is implicated in the regulation cell proliferation and cell growth. Signals downstream of phosphatidylinositol 3-kinase (PI(3)K) to mediate the effects of various growth factors such as platelet-derived growth factor (PDGF), epidermal growth factor (EGF), insulin and insulin-like growth factor 1 (IGF1). AKT mediates the antiapoptotic effects of IGF1. Essential for the SPATA13-mediated regulation of cell migration and adhesion assembly and disassembly. May be involved in the regulation of the placental development. Phosphorylates STK4/MST1 at 'Thr-120' and 'Thr-387' leading to inhibition of its: kinase activity, nuclear translocation, autophosphorylation and ability to phosphorylate FOXO3. Phosphorylates STK3/MST2 at 'Thr-117' and 'Thr-384' leading to inhibition of its: cleavage, kinase activity, autophosphorylation at Thr-180, binding to RASSF1 and nuclear translocation. Phosphorylates SRPK2 and enhances its kinase activity towards SRSF2 and ACIN1 and promotes its nuclear translocation. Phosphorylates RAF1 at 'Ser-259' and negatively regulates its activity. Phosphorylation of BAD stimulates its pro-apoptotic activity. Phosphorylates KAT6A at 'Thr-369' and this phosphorylation inhibits the interaction of KAT6A with PML and negatively regulates its acetylation activity towards p53/TP53. Phosphorylates palladin (PALLD), modulating cytoskeletal organization and cell motility. Phosphorylates prohibitin (PHB), playing an important role in cell metabolism and proliferation. Phosphorylates CDKN1A, for which phosphorylation at 'Thr-145' induces its release from CDK2 and cytoplasmic relocalization. These recent findings indicate that the AKT1 isoform has a more specific role in cell motility and proliferation. Phosphorylates CLK2 thereby controlling cell survival to ionizing radiation. Phosphorylates PCK1 at 'Ser-90', reducing the binding affinity of PCK1 to oxaloacetate and changing PCK1 into an atypical protein kinase activity using GTP as donor. Also acts as an activator of TMEM175 potassium channel activity in response to growth factors: forms the lysoK(GF) complex together with TMEM175 and acts by promoting TMEM175 channel activation, independently of its protein kinase activity. Acts as a negative regulator of the cGAS-STING pathway by mediating phosphorylation of CGAS during mitosis, leading to its inhibition. Acts as a regulator of mitochondrial calcium uptake by mediating phosphorylation of MICU1 in the mitochondrial intermembrane space, impairing MICU1 maturation. Acts as an inhibitor of tRNA methylation by mediating phosphorylation of the N-terminus of METTL1, thereby inhibiting METTL1 methyltransferase activity. In response to LPAR1 receptor pathway activation, phosphorylates Rabin8/RAB3IP which alters its activity and phosphorylates WDR44 which induces WDR44 binding to Rab11, thereby switching Rab11 vesicular function from preciliary trafficking to endocytic recycling. This is RAC-alpha serine/threonine-protein kinase (Akt1) from Mus musculus (Mouse).